The sequence spans 525 residues: G patch domain-containing protein 3 (525 aa).

Disordered stretches follow at residues 54–85 and 246–317; these read ERGP…PASD and EQEE…QERT. The segment covering 274–299 has biased composition (acidic residues); it reads DEPEDEGQQQEEEEESGSEEDDDRGE. The segment covering 300 to 317 has biased composition (basic and acidic residues); it reads EWERHEALHEDVTGQERT. Positions 411–459 constitute a G-patch domain; the sequence is TKGIGRKVMERQGWAEGQGLGSRCSGVPEALDGDGQHPRCKRGLGYHGE.

Interacts with mitochondrial MAVS; the interaction is markedly increased upon viral infection.

The protein resides in the nucleus. It is found in the cytoplasm. Functionally, involved in transcriptional regulation. It is able to activate transcription from CXCR4 promoter and therefore it might control neural crest cell migration involved in ocular and craniofacial development. Is a negative regulator of immune antiviral response, acting via down-regulation of RIG-I-like receptors signaling and inhibition of type I interferon production. The control mechanism involves interaction with mitochondrial MAVS and inhibition of MAVS assembly with downstream proteins implicated in antiviral response, such as TBK1 and TRAF6. The protein is G patch domain-containing protein 3 (Gpatch3) of Mus musculus (Mouse).